The following is a 406-amino-acid chain: NADH-quinone oxidoreductase subunit D (406 aa).

The protein belongs to the complex I 49 kDa subunit family. NDH-1 is composed of 14 different subunits. Subunits NuoB, C, D, E, F, and G constitute the peripheral sector of the complex.

Its subcellular location is the cell inner membrane. It catalyses the reaction a quinone + NADH + 5 H(+)(in) = a quinol + NAD(+) + 4 H(+)(out). NDH-1 shuttles electrons from NADH, via FMN and iron-sulfur (Fe-S) centers, to quinones in the respiratory chain. The immediate electron acceptor for the enzyme in this species is believed to be ubiquinone. Couples the redox reaction to proton translocation (for every two electrons transferred, four hydrogen ions are translocated across the cytoplasmic membrane), and thus conserves the redox energy in a proton gradient. The polypeptide is NADH-quinone oxidoreductase subunit D (Acidiphilium cryptum (strain JF-5)).